The sequence spans 235 residues: Ubiquinone/menaquinone biosynthesis C-methyltransferase UbiE (235 aa).

S-adenosyl-L-methionine-binding residues include Thr-59, Asp-84, and Ser-123.

The protein belongs to the class I-like SAM-binding methyltransferase superfamily. MenG/UbiE family.

It catalyses the reaction a 2-demethylmenaquinol + S-adenosyl-L-methionine = a menaquinol + S-adenosyl-L-homocysteine + H(+). It carries out the reaction a 2-methoxy-6-(all-trans-polyprenyl)benzene-1,4-diol + S-adenosyl-L-methionine = a 5-methoxy-2-methyl-3-(all-trans-polyprenyl)benzene-1,4-diol + S-adenosyl-L-homocysteine + H(+). The protein operates within quinol/quinone metabolism; menaquinone biosynthesis; menaquinol from 1,4-dihydroxy-2-naphthoate: step 2/2. It participates in cofactor biosynthesis; ubiquinone biosynthesis. Its function is as follows. Methyltransferase required for the conversion of demethylmenaquinol (DMKH2) to menaquinol (MKH2) and the conversion of 2-polyprenyl-6-methoxy-1,4-benzoquinol (DDMQH2) to 2-polyprenyl-3-methyl-6-methoxy-1,4-benzoquinol (DMQH2). This chain is Ubiquinone/menaquinone biosynthesis C-methyltransferase UbiE, found in Campylobacter jejuni subsp. jejuni serotype O:23/36 (strain 81-176).